We begin with the raw amino-acid sequence, 537 residues long: uncharacterized protein (537 aa).

4 disordered regions span residues 1 to 33 (MEPG…ILAF), 71 to 98 (SSPP…RKRQ), 197 to 220 (SHNN…SEEK), and 516 to 537 (GRQR…EEQN). Residue serine 72 is modified to Phosphoserine. Positions 88 to 98 (SRVDSEARKRQ) are enriched in basic and acidic residues. A compositionally biased stretch (polar residues) spans 197 to 214 (SHNNMASSNTQSNTQLSE). The span at 516 to 529 (GRQRSSRYKSHVHK) shows a compositional bias: basic residues.

This sequence belongs to the NAD kinase family.

This is an uncharacterized protein from Schizosaccharomyces pombe (strain 972 / ATCC 24843) (Fission yeast).